Here is a 660-residue protein sequence, read N- to C-terminus: Ankyrin repeat domain-containing protein OPG023 (660 aa).

ANK repeat units lie at residues 31–64, 101–131, 135–166, 190–222, 226–257, 268–302, 325–359, 449–478, and 482–512; these read FKNNALHAYLFNEHCNNVEVVKLLLDSGTNPLHK, NDFNIFSYMKSKNVDVDLIKVLVEHGFDLSV, NHRSVIENYVMTDDPVPEIIDLFIENGCSVLY, YIIAHLYSESDTRAYVRPEVVKCLINHGIKPSS, NYCTALQYYIKSSHIDIDIVKLLMKGIDNTAY, RGIMADYLNSDYRYNKDVDLDLVKLFLENGKPYGI, NSDVLQHILIEYMTFGDIDIPLVECMLEYGAVVNK, RGETLLHKAVRYNKQSLVSLLLESGSDVNI, and NGYTCITIAINESRNIELLKMLLCHKPTLDC. Residues 578-658 are PRANC/F-box-like; the sequence is NTMFSLIFTE…PYTIKYKIFE (81 aa).

This sequence belongs to the orthopoxvirus OPG023 family. Interacts (via N-terminus) with host RELA. Interacts (via PRANC/F-box-like domain) with the SKP1 component of the host SCF ubiquitin ligase complex.

In terms of biological role, substrate-specific adapter of SKP1-containing E3 ubiquitin-protein ligases which mediate the ubiquitination and subsequent proteasomal degradation of host target proteins. Prevents activation and subsequent nuclear localization of NF-kappa-B in infected cells, by targeting NF-kappa-B RELA subunit to the SCF E3 ligase complex. This Cynomys gunnisoni (Gunnison's prairie dog) protein is Ankyrin repeat domain-containing protein OPG023 (OPG023).